We begin with the raw amino-acid sequence, 264 residues long: Merozoite surface protein 2 (264 aa).

Residues 1–20 form the signal peptide; sequence MKVIKTLSIINFFIFVTFNI. N-linked (GlcNAc...) asparagine glycosylation is found at N22 and N36. The interval 44-190 is polymorphic region; the sequence is ANEGSNTNSV…PQTAENENPA (147 aa). Residues 46-227 are disordered; that stretch reads EGSNTNSVGA…QKECTDGNKE (182 aa). A run of 2 repeats spans residues 60 to 91 and 92 to 123. A 2 X 32 AA perfects repeats region spans residues 60–123; it reads ADTIASGSQR…GESQTTTPTA (64 aa). Positions 70-81 are enriched in low complexity; that stretch reads STNSASTSTTNN. Residues 82–101 show a composition bias toward polar residues; it reads GESQTTTPTAADTIASGSQR. The segment covering 102–145 has biased composition (low complexity); the sequence is STNSASTSTTNNGESQTTTPTAADTPTATESISPSPPITTTESS. The segment covering 154–166 has biased composition (basic and acidic residues); the sequence is TDGKGEESEKQNE. The N-linked (GlcNAc...) asparagine glycan is linked to N213. The span at 217 to 226 shows a compositional bias: basic and acidic residues; the sequence is SQKECTDGNK. An intrachain disulfide couples C221 to C229. N-linked (GlcNAc...) asparagine glycosylation occurs at N238. N238 is lipidated: GPI-anchor amidated asparagine. Positions 239–264 are cleaved as a propeptide — removed in mature form; that stretch reads SSNIASINKFVVLISATLVLSFAIFI.

It is found in the cell membrane. In terms of biological role, may play a role in the merozoite attachment to the erythrocyte. This is Merozoite surface protein 2 from Plasmodium falciparum (isolate FC27 / Papua New Guinea).